The primary structure comprises 143 residues: Large ribosomal subunit protein uL11 (143 aa).

This sequence belongs to the universal ribosomal protein uL11 family. As to quaternary structure, part of the ribosomal stalk of the 50S ribosomal subunit. Interacts with L10 and the large rRNA to form the base of the stalk. L10 forms an elongated spine to which L12 dimers bind in a sequential fashion forming a multimeric L10(L12)X complex. One or more lysine residues are methylated.

Functionally, forms part of the ribosomal stalk which helps the ribosome interact with GTP-bound translation factors. This chain is Large ribosomal subunit protein uL11, found in Rhizobium rhizogenes (strain K84 / ATCC BAA-868) (Agrobacterium radiobacter).